The primary structure comprises 553 residues: Putative transport protein YidE (553 aa).

The next 5 membrane-spanning stretches (helical) occupy residues 4–24 (IALT…IGNV), 28–48 (GIGL…HFVS), 65–85 (FGLI…FFAS), 95–115 (LFAV…HKLF), and 158–178 (MSYA…MWML). RCK C-terminal domains are found at residues 191 to 276 (QQHE…VIGQ) and 279 to 361 (DTSL…VLGN). 6 consecutive transmembrane segments (helical) span residues 371–391 (MLPV…PVFV), 393–413 (GFPA…ALIL), 439–459 (IVLF…NTLV), 464–484 (LSWI…VGIL), 493–513 (YLTM…LAFA), and 533–553 (LVMF…WSIG).

The protein belongs to the AAE transporter (TC 2.A.81) family. YidE subfamily.

The protein resides in the cell membrane. The chain is Putative transport protein YidE from Escherichia coli O7:K1 (strain IAI39 / ExPEC).